Here is a 48-residue protein sequence, read N- to C-terminus: Light-harvesting polypeptide B-885 beta-2 chain (48 aa).

Over 1–20 the chain is Cytoplasmic; sequence AEDRKSLSGLTEQEAQEFGT. The helical transmembrane segment at 21-43 threads the bilayer; it reads LYTQGVAFVAVIAIVAHALVWAW. His37 is a binding site for a bacteriochlorophyll. The Periplasmic segment spans residues 44 to 48; the sequence is RPWLQ.

It belongs to the antenna complex beta subunit family. The core complex is formed by different alpha and beta chains, binding bacteriochlorophyll molecules, and arranged most probably in tetrameric structures disposed around the reaction center. The non-pigmented gamma chains may constitute additional components.

The protein localises to the cell inner membrane. Functionally, antenna complexes are light-harvesting systems, which transfer the excitation energy to the reaction centers. The chain is Light-harvesting polypeptide B-885 beta-2 chain from Rhodocyclus tenuis (Rhodospirillum tenue).